The sequence spans 174 residues: MIQLMLYSLIITTSIIFLNMIHPLALGLTLLIQTIFVCLLTGLMTKSFWYSYILFLIFLGGMLVLFIYVTSLASNEMFNLSMKLTLFSSLILIFMLILSFIMDKTSSSLFLMNNDMQSIINMNSYFMENSLSLNKLYNFPTNFITILLMNYLLITLIVIVKITKLFKGPIRMMS.

The next 4 membrane-spanning stretches (helical) occupy residues 24 to 44 (LALG…TGLM), 53 to 73 (ILFL…TSLA), 82 to 102 (MKLT…SFIM), and 143 to 163 (FITI…VKIT).

It belongs to the complex I subunit 6 family.

The protein resides in the mitochondrion membrane. It carries out the reaction a ubiquinone + NADH + 5 H(+)(in) = a ubiquinol + NAD(+) + 4 H(+)(out). Core subunit of the mitochondrial membrane respiratory chain NADH dehydrogenase (Complex I) that is believed to belong to the minimal assembly required for catalysis. Complex I functions in the transfer of electrons from NADH to the respiratory chain. The immediate electron acceptor for the enzyme is believed to be ubiquinone. This Drosophila melanogaster (Fruit fly) protein is NADH-ubiquinone oxidoreductase chain 6 (mt:ND6).